We begin with the raw amino-acid sequence, 439 residues long: Xylose isomerase (439 aa).

Catalysis depends on residues H103 and D106. E234, E270, H273, D298, D309, D311, and D341 together coordinate Mg(2+).

It belongs to the xylose isomerase family. Homotetramer. Mg(2+) serves as cofactor.

Its subcellular location is the cytoplasm. The catalysed reaction is alpha-D-xylose = alpha-D-xylulofuranose. The chain is Xylose isomerase from Bacteroides fragilis (strain ATCC 25285 / DSM 2151 / CCUG 4856 / JCM 11019 / LMG 10263 / NCTC 9343 / Onslow / VPI 2553 / EN-2).